A 518-amino-acid polypeptide reads, in one-letter code: Putative succinate-semialdehyde dehydrogenase [NADP(+)] 2 (518 aa).

NADP(+) is bound by residues 157–158, 181–184, and 232–233; these read WN, KPDS, and GS. Residue glutamate 254 is the Proton acceptor of the active site. Leucine 255 is a binding site for NADP(+). The Nucleophile role is filled by cysteine 288. Glutamate 386 contacts NADP(+).

This sequence belongs to the aldehyde dehydrogenase family.

The enzyme catalyses succinate semialdehyde + NADP(+) + H2O = succinate + NADPH + 2 H(+). Catalyzes the NADP(+)-dependent oxidation of succinate semialdehyde to succinate. Although it has succinate semialdehyde dehydrogenase activity, is likely to act physiologically on a different aldehyde(s). This chain is Putative succinate-semialdehyde dehydrogenase [NADP(+)] 2 (gabD2), found in Mycobacterium bovis (strain ATCC BAA-935 / AF2122/97).